A 561-amino-acid polypeptide reads, in one-letter code: Dihydroxy-acid dehydratase (561 aa).

Asp78 provides a ligand contact to Mg(2+). Position 119 (Cys119) interacts with [2Fe-2S] cluster. Mg(2+)-binding residues include Asp120 and Lys121. At Lys121 the chain carries N6-carboxylysine. Cys192 contacts [2Fe-2S] cluster. Position 448 (Glu448) interacts with Mg(2+). Ser474 (proton acceptor) is an active-site residue.

The protein belongs to the IlvD/Edd family. As to quaternary structure, homodimer. It depends on [2Fe-2S] cluster as a cofactor. Mg(2+) serves as cofactor.

The enzyme catalyses (2R)-2,3-dihydroxy-3-methylbutanoate = 3-methyl-2-oxobutanoate + H2O. The catalysed reaction is (2R,3R)-2,3-dihydroxy-3-methylpentanoate = (S)-3-methyl-2-oxopentanoate + H2O. The protein operates within amino-acid biosynthesis; L-isoleucine biosynthesis; L-isoleucine from 2-oxobutanoate: step 3/4. Its pathway is amino-acid biosynthesis; L-valine biosynthesis; L-valine from pyruvate: step 3/4. In terms of biological role, functions in the biosynthesis of branched-chain amino acids. Catalyzes the dehydration of (2R,3R)-2,3-dihydroxy-3-methylpentanoate (2,3-dihydroxy-3-methylvalerate) into 2-oxo-3-methylpentanoate (2-oxo-3-methylvalerate) and of (2R)-2,3-dihydroxy-3-methylbutanoate (2,3-dihydroxyisovalerate) into 2-oxo-3-methylbutanoate (2-oxoisovalerate), the penultimate precursor to L-isoleucine and L-valine, respectively. The chain is Dihydroxy-acid dehydratase from Sulfurimonas denitrificans (strain ATCC 33889 / DSM 1251) (Thiomicrospira denitrificans (strain ATCC 33889 / DSM 1251)).